The following is a 1372-amino-acid chain: MSVVNFYGQLSNTQQFDQIRINIASPEQVRSWSFGEVIKPETINYRTFKPEKDGLFCARIFGPVKDYECLCGKYKRMKNRGITCEKCGVEVTVSRVRRERMGHIELAAPVAHIWFLKSLPSRISTLLDMTMRDIEKILYFENYVVVDPGLSILQKGELLTEEELQKAKDKYGEDAFTASIGAEVVQQMLKELDFPTLKQELYEELQNTTSEVKKKKLVKRLKLVEDFLESENKPEWMIMNVLPVMPPELRPLVMLDGGRFATSDLNELYRRVINRNNRLKKLIESKAPDIIVRNEKRMLQEAVDALFDNGRRGRAAKNANKRPFKSLSDMLKGKQGRFRQNLLGKRVDYSGRSVIVVGPELKLHQCGLPKKMALELFKPFIYSKLELYGIATTIKAAKRMVEAEKPEVWDVLEEVIREHPVLLNRAPTLHRLGIQAFEPLLIEGKAIQLHPLVCAAFNADFDGDQMAVHIPLSIEAQLEARVFMMSTNNILSPANGRPIIVPDKDIVLGLYYLTLAFDHEVGEGMMFSDLTEMEHALYNKFITIHTKIKYRRNQLNAEGKIVPVIVDTTYGRLMVGELLPSNPNIEYKFINKPLTKKDISLVIDLVYRHCGQKATVIFADQLMKLGFKYACSSGISFGMDDMVVPKSKIVHIDETQLEIKEFEQQYSNGLITYGEKYNKVIDAWSRCTDRVANDMMKEIAKPPVSDDSNQQKINSIYMMAISGARGSFQQIKQLGGMRGLMTKSNGQIIPIPIIANFKEGLTVFECFNSANGMRKGQIDTALKTASSGYLTRKLVDVAQDCIITEKDCNTDKGIEVKSIIEGGEVIAPLAEMILGRTAAINIYHPVTNDLILTKGELINESKLEQIESAGLDRIMIKSVLTCESSTGICAICYGRDLATGSLVSEGEAIGVIAAQSIGEPGTQLTMRTFHIGGAATKGAEVSSVEASYDAKVKILSRNVVINSEERKIVMSRNCELLLLDNNGNEKAHSKIPYGARLLVDEGDMVTKTQKLAEWDPYTIPIITEKSGKVLFKDMVEGISVRDVTDEATGIPSKVIIESKQYSRGAELRPRIQLLDAKGEIIMLSNGLEARYYLPVGAVLSVEDGVQISVGDIIARIPKESTTTKDITGGLPRVAELFEARRPKDHAVIAEIDGRVEFGKDYKSKRRIIINPVDGSMGLEYMVPKGKHVVVNEGDFVKKGDLLIDGNPVLQDILKVMGVELLASYIVKEVQAVYRLQGVKIDDKHIEVIIRQMLQKVEITDSGGTTLLVGEKIDRREFDEINEKAIKNGLRPADAQLILQGITKSSLQTRSFISAASFQETTRVLTEAAIAGKVDKLRGLKENVIVGRLVPAGTGFFMDKMRKVAAKLDEENA.

Residues C69, C71, C84, and C87 each coordinate Zn(2+). Mg(2+) contacts are provided by D460, D462, and D464. The Zn(2+) site is built by C808, C882, C889, and C892.

The protein belongs to the RNA polymerase beta' chain family. In terms of assembly, the RNAP catalytic core consists of 2 alpha, 1 beta, 1 beta' and 1 omega subunit. When a sigma factor is associated with the core the holoenzyme is formed, which can initiate transcription. It depends on Mg(2+) as a cofactor. Zn(2+) is required as a cofactor.

The catalysed reaction is RNA(n) + a ribonucleoside 5'-triphosphate = RNA(n+1) + diphosphate. DNA-dependent RNA polymerase catalyzes the transcription of DNA into RNA using the four ribonucleoside triphosphates as substrates. This chain is DNA-directed RNA polymerase subunit beta', found in Rickettsia bellii (strain OSU 85-389).